The chain runs to 281 residues: Aldo-keto reductase MAP_3007 (281 aa).

The Proton donor role is filled by Y56. Positions 196, 234, 236, 237, 238, 245, and 272 each coordinate NADPH.

Belongs to the aldo/keto reductase family.

This chain is Aldo-keto reductase MAP_3007, found in Mycolicibacterium paratuberculosis (strain ATCC BAA-968 / K-10) (Mycobacterium paratuberculosis).